The primary structure comprises 155 residues: MSKITEQIEEIIQPVLDDLNFELVEIEFTKEGKDHFLRISIDKEGGVDLNDCTLASEKISEVMNEEDPIEQMYYLDVASPGAERPIKTDKALHDAVEQPVFVSLYAPIDGSKEWLGVLQSVTDDHIVIKAQVKEKKKEVEIPRNKIAKARHAVLI.

This sequence belongs to the RimP family.

It localises to the cytoplasm. Functionally, required for maturation of 30S ribosomal subunits. The protein is Ribosome maturation factor RimP of Staphylococcus carnosus (strain TM300).